Reading from the N-terminus, the 178-residue chain is MRVLVLPEELRDELKEPLGVLYRCHGVECVERMSDHLRAAERVIAVGDITTFYLLKASFIPDLMIVDHKTKRSPVEDSIKRRHLEGSYRVVNVENPAGTLTEELLDAVRESLNGCTPTEIIVDGEEDLAALPAILYAPLGSAVVYGQPSVGSVLVMVTPEKKREIEGILRRMTVKEKV.

Aspartate 48, isoleucine 49, aspartate 67, lysine 69, and glutamate 126 together coordinate GTP.

The protein belongs to the GTP-dependent DPCK family.

The enzyme catalyses 3'-dephospho-CoA + GTP = GDP + CoA + H(+). It functions in the pathway cofactor biosynthesis; coenzyme A biosynthesis. Functionally, catalyzes the GTP-dependent phosphorylation of the 3'-hydroxyl group of dephosphocoenzyme A to form coenzyme A (CoA). The protein is GTP-dependent dephospho-CoA kinase of Methanothrix thermoacetophila (strain DSM 6194 / JCM 14653 / NBRC 101360 / PT) (Methanosaeta thermophila).